The primary structure comprises 231 residues: Ribose-5-phosphate isomerase A (231 aa).

Substrate-binding positions include 28–31, 83–86, and 96–99; these read TGST, DGAD, and KGGG. E105 acts as the Proton acceptor in catalysis. Residue K123 coordinates substrate.

This sequence belongs to the ribose 5-phosphate isomerase family. Homodimer.

It carries out the reaction aldehydo-D-ribose 5-phosphate = D-ribulose 5-phosphate. It functions in the pathway carbohydrate degradation; pentose phosphate pathway; D-ribose 5-phosphate from D-ribulose 5-phosphate (non-oxidative stage): step 1/1. In terms of biological role, catalyzes the reversible conversion of ribose-5-phosphate to ribulose 5-phosphate. The chain is Ribose-5-phosphate isomerase A from Parvibaculum lavamentivorans (strain DS-1 / DSM 13023 / NCIMB 13966).